The primary structure comprises 194 residues: Probable GTP-binding protein EngB (194 aa).

In terms of domain architecture, EngB-type G spans 22 to 194 (KIPQIAIVGK…LRIFEEVIEK (173 aa)). Residues 30-37 (GKSNVGKS), 57-61 (GKTRG), 75-78 (DLPG), 142-145 (TKAD), and 173-175 (FSA) each bind GTP. Mg(2+) is bound by residues Ser37 and Thr59.

It belongs to the TRAFAC class TrmE-Era-EngA-EngB-Septin-like GTPase superfamily. EngB GTPase family. It depends on Mg(2+) as a cofactor.

Necessary for normal cell division and for the maintenance of normal septation. The chain is Probable GTP-binding protein EngB from Caldanaerobacter subterraneus subsp. tengcongensis (strain DSM 15242 / JCM 11007 / NBRC 100824 / MB4) (Thermoanaerobacter tengcongensis).